Here is a 118-residue protein sequence, read N- to C-terminus: MAGVRQHGWRAIPAVCSEYGADTLPDRYRSDGRCLLFWQQAGISALKQELEVKTPYRAMNHPVIGVVTKADLASMEQISLVKSWLREAGAHNVLVTSAVNNNGVTELFALLHTEEGCC.

The polypeptide is Protein YoeF (yoeF) (Escherichia coli (strain K12)).